A 191-amino-acid polypeptide reads, in one-letter code: NAD(P)H-dependent FMN reductase LOT6 (191 aa).

FMN is bound by residues Arg-11, 94–97 (QYNW), and Tyr-124.

In terms of assembly, homodimer.

Its subcellular location is the cytoplasm. The protein localises to the nucleus. It carries out the reaction FMNH2 + NADP(+) = FMN + NADPH + 2 H(+). The catalysed reaction is FMNH2 + NAD(+) = FMN + NADH + 2 H(+). Has several reductase activities that are NAD(P)H-dependent and involve FMN as a cofactor, ferricyanide being the best substrate for reduction. May be involved in ferric iron assimilation. The chain is NAD(P)H-dependent FMN reductase LOT6 (LOT6) from Saccharomyces cerevisiae (strain ATCC 204508 / S288c) (Baker's yeast).